Reading from the N-terminus, the 861-residue chain is Nuclear pore complex protein NUP93A (861 aa).

This sequence belongs to the nucleoporin interacting component (NIC) family. As to quaternary structure, part of the nuclear pore complex (NPC). The NPC has an eight-fold symmetrical structure comprising a central transport channel and two rings, the cytoplasmic and nuclear rings, to which eight filaments are attached. The cytoplasmic filaments have loose ends, while the nuclear filaments are joined in a distal ring, forming a nuclear basket. NPCs are highly dynamic in configuration and composition, and can be devided in 3 subcomplexes, the NUP62 subcomplex, the NUP107-160 subcomplex and the NUP93 subcomplex, containing approximately 30 different nucleoporin proteins.

It localises to the nucleus envelope. The protein localises to the nucleus. It is found in the nuclear pore complex. In Arabidopsis thaliana (Mouse-ear cress), this protein is Nuclear pore complex protein NUP93A.